Consider the following 379-residue polypeptide: Succinate--CoA ligase [ADP-forming] subunit beta (379 aa).

Residues 9–236 (KEIARKYGIE…GRDATPYEKV (228 aa)) form the ATP-grasp domain. ATP is bound by residues Lys-46, 53–55 (GRG), Glu-92, Val-95, and Glu-100. Mg(2+) contacts are provided by Asn-192 and Asp-206. Residues Asn-256 and 313–315 (GIT) contribute to the substrate site.

The protein belongs to the succinate/malate CoA ligase beta subunit family. In terms of assembly, heterotetramer of two alpha and two beta subunits. The cofactor is Mg(2+).

The catalysed reaction is succinate + ATP + CoA = succinyl-CoA + ADP + phosphate. It catalyses the reaction GTP + succinate + CoA = succinyl-CoA + GDP + phosphate. Its pathway is carbohydrate metabolism; tricarboxylic acid cycle; succinate from succinyl-CoA (ligase route): step 1/1. Its function is as follows. Succinyl-CoA synthetase functions in the citric acid cycle (TCA), coupling the hydrolysis of succinyl-CoA to the synthesis of either ATP or GTP and thus represents the only step of substrate-level phosphorylation in the TCA. The beta subunit provides nucleotide specificity of the enzyme and binds the substrate succinate, while the binding sites for coenzyme A and phosphate are found in the alpha subunit. The chain is Succinate--CoA ligase [ADP-forming] subunit beta from Desulfurococcus amylolyticus (strain DSM 18924 / JCM 16383 / VKM B-2413 / 1221n) (Desulfurococcus kamchatkensis).